The chain runs to 75 residues: Small ribosomal subunit protein bS18 (75 aa).

It belongs to the bacterial ribosomal protein bS18 family. In terms of assembly, part of the 30S ribosomal subunit. Forms a tight heterodimer with protein bS6.

Binds as a heterodimer with protein bS6 to the central domain of the 16S rRNA, where it helps stabilize the platform of the 30S subunit. This chain is Small ribosomal subunit protein bS18, found in Shewanella loihica (strain ATCC BAA-1088 / PV-4).